A 92-amino-acid chain; its full sequence is RNA-binding protein Hfq (92 aa).

The 60-residue stretch at 9–68 (DPFLNALRRERVPVSIYLVNGIKLQGQVESFDQFVILLKNTVSQMVYKHAISTVVPSRPF) folds into the Sm domain. The segment covering 73-82 (HQATNAQAGY) has biased composition (polar residues). The disordered stretch occupies residues 73–92 (HQATNAQAGYNAQHDDGDEK).

The protein belongs to the Hfq family. As to quaternary structure, homohexamer.

Functionally, RNA chaperone that binds small regulatory RNA (sRNAs) and mRNAs to facilitate mRNA translational regulation in response to envelope stress, environmental stress and changes in metabolite concentrations. Also binds with high specificity to tRNAs. This chain is RNA-binding protein Hfq, found in Shewanella pealeana (strain ATCC 700345 / ANG-SQ1).